The following is a 560-amino-acid chain: uncharacterized protein (560 aa).

The first 29 residues, Met-1–Ala-29, serve as a signal peptide directing secretion. Positions 66, 67, and 132 each coordinate Ca(2+). Ser-132 (nucleophile) is an active-site residue. Residue Ser-132 is modified to 3-oxoalanine (Ser). His-185 is an active-site residue. Asp-345 and Asn-346 together coordinate Ca(2+).

It belongs to the sulfatase family. Requires Ca(2+) as cofactor. Post-translationally, the conversion to 3-oxoalanine (also known as C-formylglycine, FGly), of a serine or cysteine residue in prokaryotes and of a cysteine residue in eukaryotes, is critical for catalytic activity.

This is an uncharacterized protein from Escherichia coli (strain K12).